Consider the following 488-residue polypeptide: GTPase Der (488 aa).

EngA-type G domains lie at 3–166 (PVVA…AEAM) and 200–373 (IKLA…DSAT). GTP-binding positions include 9-16 (GRPNVGKS), 56-60 (DTGGI), 118-121 (NKVD), 206-213 (GKPNVGKS), 253-257 (DTAGV), and 318-321 (NKWD). In terms of domain architecture, KH-like spans 374–458 (RRVSTSMLTR…PIQLRFHEGD (85 aa)).

This sequence belongs to the TRAFAC class TrmE-Era-EngA-EngB-Septin-like GTPase superfamily. EngA (Der) GTPase family. Associates with the 50S ribosomal subunit.

Its function is as follows. GTPase that plays an essential role in the late steps of ribosome biogenesis. This Shewanella amazonensis (strain ATCC BAA-1098 / SB2B) protein is GTPase Der.